The primary structure comprises 166 residues: Urease accessory protein UreE (166 aa).

The interval 135 to 156 (EQGAYGGGHHHSHHGDEEFNYG) is disordered.

The protein belongs to the UreE family.

The protein resides in the cytoplasm. Involved in urease metallocenter assembly. Binds nickel. Probably functions as a nickel donor during metallocenter assembly. This Ectopseudomonas mendocina (strain ymp) (Pseudomonas mendocina) protein is Urease accessory protein UreE.